A 195-amino-acid polypeptide reads, in one-letter code: Glycerol-3-phosphate acyltransferase (195 aa).

Helical transmembrane passes span 7–27 (IFIL…SYVI), 52–72 (LALL…AIAQ), 80–100 (ILFL…YLFF), 113–133 (LIFI…ICFL), and 147–167 (LIAL…IFTI).

The protein belongs to the PlsY family. In terms of assembly, probably interacts with PlsX.

The protein localises to the cell inner membrane. It catalyses the reaction an acyl phosphate + sn-glycerol 3-phosphate = a 1-acyl-sn-glycero-3-phosphate + phosphate. The protein operates within lipid metabolism; phospholipid metabolism. Functionally, catalyzes the transfer of an acyl group from acyl-phosphate (acyl-PO(4)) to glycerol-3-phosphate (G3P) to form lysophosphatidic acid (LPA). This enzyme utilizes acyl-phosphate as fatty acyl donor, but not acyl-CoA or acyl-ACP. The sequence is that of Glycerol-3-phosphate acyltransferase from Ehrlichia ruminantium (strain Welgevonden).